We begin with the raw amino-acid sequence, 341 residues long: L-threonine 3-dehydrogenase (341 aa).

Cys-38 is a Zn(2+) binding site. Active-site charge relay system residues include Thr-40 and His-43. Zn(2+) contacts are provided by His-63, Glu-64, Cys-93, Cys-96, Cys-99, and Cys-107. Residues Ile-175, Asp-195, Arg-200, 262–264, and 286–287 each bind NAD(+); these read LGI and IY.

The protein belongs to the zinc-containing alcohol dehydrogenase family. Homotetramer. Requires Zn(2+) as cofactor.

It is found in the cytoplasm. It carries out the reaction L-threonine + NAD(+) = (2S)-2-amino-3-oxobutanoate + NADH + H(+). Its pathway is amino-acid degradation; L-threonine degradation via oxydo-reductase pathway; glycine from L-threonine: step 1/2. Catalyzes the NAD(+)-dependent oxidation of L-threonine to 2-amino-3-ketobutyrate. This is L-threonine 3-dehydrogenase from Shewanella sp. (strain MR-7).